The sequence spans 312 residues: Glyoxylate/hydroxypyruvate reductase A (312 aa).

The active site involves Arg-227. The Proton donor role is filled by His-275.

It belongs to the D-isomer specific 2-hydroxyacid dehydrogenase family. GhrA subfamily.

It is found in the cytoplasm. The catalysed reaction is glycolate + NADP(+) = glyoxylate + NADPH + H(+). The enzyme catalyses (R)-glycerate + NAD(+) = 3-hydroxypyruvate + NADH + H(+). It carries out the reaction (R)-glycerate + NADP(+) = 3-hydroxypyruvate + NADPH + H(+). Its function is as follows. Catalyzes the NADPH-dependent reduction of glyoxylate and hydroxypyruvate into glycolate and glycerate, respectively. This Escherichia coli (strain ATCC 8739 / DSM 1576 / NBRC 3972 / NCIMB 8545 / WDCM 00012 / Crooks) protein is Glyoxylate/hydroxypyruvate reductase A.